A 416-amino-acid chain; its full sequence is Ribulose bisphosphate carboxylase large chain (416 aa).

K5 is subject to N6,N6,N6-trimethyllysine. Substrate-binding residues include N114 and T164. K166 functions as the Proton acceptor in the catalytic mechanism. Residue K168 coordinates substrate. 3 residues coordinate Mg(2+): K192, D194, and E195. Position 192 is an N6-carboxylysine (K192). H285 acts as the Proton acceptor in catalysis. Positions 286, 318, and 370 each coordinate substrate.

It belongs to the RuBisCO large chain family. Type I subfamily. Heterohexadecamer of 8 large chains and 8 small chains; disulfide-linked. The disulfide link is formed within the large subunit homodimers. Requires Mg(2+) as cofactor. Post-translationally, the disulfide bond which can form in the large chain dimeric partners within the hexadecamer appears to be associated with oxidative stress and protein turnover.

It localises to the plastid. The protein localises to the chloroplast. It carries out the reaction 2 (2R)-3-phosphoglycerate + 2 H(+) = D-ribulose 1,5-bisphosphate + CO2 + H2O. The catalysed reaction is D-ribulose 1,5-bisphosphate + O2 = 2-phosphoglycolate + (2R)-3-phosphoglycerate + 2 H(+). Its function is as follows. RuBisCO catalyzes two reactions: the carboxylation of D-ribulose 1,5-bisphosphate, the primary event in carbon dioxide fixation, as well as the oxidative fragmentation of the pentose substrate in the photorespiration process. Both reactions occur simultaneously and in competition at the same active site. The protein is Ribulose bisphosphate carboxylase large chain (rbcL) of Spigelia marilandica (Woodland pinkroot).